A 1065-amino-acid polypeptide reads, in one-letter code: Putative guanine nucleotide-exchange factor SED4 (1065 aa).

Topologically, residues 1-346 (MSGNSANYDV…SSSILRNIWK (346 aa)) are cytoplasmic. S65 carries the post-translational modification Phosphoserine. WD repeat units lie at residues 259–298 (FDLNGITSMDVSPNKKFVALSSNDNLVAIVSVEKLKLVQL) and 302–341 (VHESTITKVTFSPDSRYLASTSMGNTINVLKLSGTSSSIL). Residues 347-365 (FFLNFVLLVVLAGAIQLGY) form a helical; Signal-anchor for type II membrane protein membrane-spanning segment. Over 366–1065 (KHNVHGFIYK…VNYAGLHDEL (700 aa)) the chain is Lumenal. N388 is a glycosylation site (N-linked (GlcNAc...) asparagine). 3 disordered regions span residues 458 to 477 (TSADIPTSASSSSSSSSSSF), 482 to 520 (VTNEPIVSSPTSEITKPLASPTEPNIVEKPSLPLNSESI), and 551 to 625 (QSES…SFLD). Positions 465-476 (SASSSSSSSSSS) are enriched in low complexity. Polar residues predominate over residues 482 to 495 (VTNEPIVSSPTSEI). Low complexity predominate over residues 568–621 (STESPSLSHMPSSSSSSLSLSSSLTTSPTTALSTSTATAVTTTQTNPTNDAANT). N620 is a glycosylation site (N-linked (GlcNAc...) asparagine). 4 repeat units span residues 824–833 (IDNSEYTSVL), 834–843 (ADNLEPTSVL), 844–853 (ADNSEPTSVL), and 854–863 (ADSSEPTSVF). The 4 X 10 AA tandem repeats stretch occupies residues 824-863 (IDNSEYTSVLADNLEPTSVLADNSEPTSVLADSSEPTSVF). The N-linked (GlcNAc...) asparagine glycan is linked to N1039. The Prevents secretion from ER motif lies at 1062 to 1065 (HDEL).

This sequence belongs to the WD repeat SEC12 family.

The protein localises to the endoplasmic reticulum membrane. Its subcellular location is the golgi apparatus membrane. In terms of biological role, putative guanine nucleotide-exchange factor (GEF) involved in the formation or budding of transport vesicles from the ER. Positive regulator of SAR1 probably through inhibition of the GTPase activation by SEC23. The chain is Putative guanine nucleotide-exchange factor SED4 (SED4) from Saccharomyces cerevisiae (strain ATCC 204508 / S288c) (Baker's yeast).